Reading from the N-terminus, the 354-residue chain is Inactive ADP-ribosyltransferase arh2 (354 aa).

Belongs to the ADP-ribosylglycohydrolase family. In terms of tissue distribution, expressed in heart (at protein level). A short form is detected in both heart and tadpole tail (at protein level).

The protein localises to the cytoplasm. Its subcellular location is the myofibril. It is found in the sarcomere. Functionally, required for myofibril assembly and outgrowth of the cardiac chambers in the developing heart. Appears to be catalytically inactive, showing no activity against O-acetyl-ADP-ribose. This is Inactive ADP-ribosyltransferase arh2 (adprhl1) from Xenopus laevis (African clawed frog).